The following is a 61-amino-acid chain: MDPNCSCSTGGSCTCSSSCGCKNCKCTSCKKSCCSCCPVGCSKCAQGCVCKGASDKCTCCA.

Met-1 is modified (N-acetylmethionine). The beta stretch occupies residues 1–29 (MDPNCSCSTGGSCTCSSSCGCKNCKCTSC). The a divalent metal cation site is built by Cys-5, Cys-7, Cys-13, Cys-15, Cys-19, Cys-21, Cys-24, Cys-26, Cys-29, Cys-33, Cys-34, Cys-36, Cys-37, Cys-41, Cys-44, Cys-48, Cys-50, Cys-57, Cys-59, and Cys-60. An alpha region spans residues 30 to 61 (KKSCCSCCPVGCSKCAQGCVCKGASDKCTCCA).

It belongs to the metallothionein superfamily. Type 1 family.

In terms of biological role, metallothioneins have a high content of cysteine residues that bind various heavy metals; these proteins are transcriptionally regulated by both heavy metals and glucocorticoids. The sequence is that of Metallothionein-1 (Mt1) from Rattus norvegicus (Rat).